The primary structure comprises 533 residues: Retinoid isomerohydrolase (533 aa).

Cys-112 carries the S-palmitoyl cysteine; in membrane form lipid modification. Phosphoserine is present on Ser-117. His-180 contributes to the Fe cation binding site. Cys-231 carries S-palmitoyl cysteine; in membrane form lipidation. The Fe cation site is built by His-241 and His-313. Cys-329 carries the S-palmitoyl cysteine; in membrane form lipid modification. A Fe cation-binding site is contributed by His-527.

It belongs to the carotenoid oxygenase family. Fe(2+) serves as cofactor. Palmitoylation by LRAT regulates ligand binding specificity; the palmitoylated form (membrane form) specifically binds all-trans-retinyl-palmitate, while the soluble unpalmitoylated form binds all-trans-retinol (vitamin A). As to expression, retinal pigment epithelium specific.

The protein localises to the cytoplasm. It localises to the cell membrane. The protein resides in the microsome membrane. It carries out the reaction an all-trans-retinyl ester + H2O = 11-cis-retinol + a fatty acid + H(+). The enzyme catalyses lutein = (3R,3'S)-zeaxanthin. The catalysed reaction is all-trans-retinyl hexadecanoate + H2O = 11-cis-retinol + hexadecanoate + H(+). In terms of biological role, critical isomerohydrolase in the retinoid cycle involved in regeneration of 11-cis-retinal, the chromophore of rod and cone opsins. Catalyzes the cleavage and isomerization of all-trans-retinyl fatty acid esters to 11-cis-retinol which is further oxidized by 11-cis retinol dehydrogenase to 11-cis-retinal for use as visual chromophore. Essential for the production of 11-cis retinal for both rod and cone photoreceptors. Also capable of catalyzing the isomerization of lutein to meso-zeaxanthin an eye-specific carotenoid. The soluble form binds vitamin A (all-trans-retinol), making it available for LRAT processing to all-trans-retinyl ester. The membrane form, palmitoylated by LRAT, binds all-trans-retinyl esters, making them available for IMH (isomerohydrolase) processing to all-cis-retinol. The soluble form is regenerated by transferring its palmitoyl groups onto 11-cis-retinol, a reaction catalyzed by LRAT. The chain is Retinoid isomerohydrolase (RPE65) from Gallus gallus (Chicken).